We begin with the raw amino-acid sequence, 84 residues long: Large ribosomal subunit protein bL27 (84 aa).

The segment at 1–23 is disordered; the sequence is MAHKKGASSSRNGRESAAQRLGV.

Belongs to the bacterial ribosomal protein bL27 family.

This Salinispora arenicola (strain CNS-205) protein is Large ribosomal subunit protein bL27.